A 308-amino-acid polypeptide reads, in one-letter code: Ornithine carbamoyltransferase (308 aa).

Carbamoyl phosphate contacts are provided by residues 56–59 (STRT), glutamine 83, arginine 107, and 134–137 (HPCQ). L-ornithine contacts are provided by residues asparagine 165, aspartate 225, and 229-230 (SM). Residues 264–265 (CL) and arginine 292 contribute to the carbamoyl phosphate site.

It belongs to the aspartate/ornithine carbamoyltransferase superfamily. OTCase family.

Its subcellular location is the cytoplasm. The catalysed reaction is carbamoyl phosphate + L-ornithine = L-citrulline + phosphate + H(+). The protein operates within amino-acid biosynthesis; L-arginine biosynthesis; L-arginine from L-ornithine and carbamoyl phosphate: step 1/3. Reversibly catalyzes the transfer of the carbamoyl group from carbamoyl phosphate (CP) to the N(epsilon) atom of ornithine (ORN) to produce L-citrulline. In Nitrobacter winogradskyi (strain ATCC 25391 / DSM 10237 / CIP 104748 / NCIMB 11846 / Nb-255), this protein is Ornithine carbamoyltransferase.